Consider the following 274-residue polypeptide: NH(3)-dependent NAD(+) synthetase (274 aa).

46–53 (GISGGQDS) lines the ATP pocket. A Mg(2+)-binding site is contributed by D52. R140 provides a ligand contact to deamido-NAD(+). T160 contacts ATP. E165 is a binding site for Mg(2+). Deamido-NAD(+) is bound by residues K173 and D180. Residues K189 and T211 each coordinate ATP. 260–261 (HK) serves as a coordination point for deamido-NAD(+).

It belongs to the NAD synthetase family. Homodimer.

The enzyme catalyses deamido-NAD(+) + NH4(+) + ATP = AMP + diphosphate + NAD(+) + H(+). The protein operates within cofactor biosynthesis; NAD(+) biosynthesis; NAD(+) from deamido-NAD(+) (ammonia route): step 1/1. Catalyzes the ATP-dependent amidation of deamido-NAD to form NAD. Uses ammonia as a nitrogen source. In Streptococcus pneumoniae serotype 2 (strain D39 / NCTC 7466), this protein is NH(3)-dependent NAD(+) synthetase.